The sequence spans 172 residues: MLSSLQNPRQAAAQLMNFAMILSTAFMMWKGLSVATDSPSPIVVVLSGSMEPAFQRGDLLLLWNRNVWQETAVGEVVVYNVKGKDIPIVHRVVRKFGTGDKAKLLTKGDNNNADDTDLYARGQDYLEREDIIGSVIGYFPFVGYVTILLSEHPWLKTVMLGIMGLLVVIQRE.

Over 1–14 the chain is Cytoplasmic; sequence MLSSLQNPRQAAAQ. The chain crosses the membrane as a helical; Signal-anchor for type II membrane protein span at residues 15-35; that stretch reads LMNFAMILSTAFMMWKGLSVA. Topologically, residues 36–172 are lumenal; the sequence is TDSPSPIVVV…MGLLVVIQRE (137 aa). Active-site charge relay system residues include serine 49, histidine 90, and aspartate 115. A C-terminal short (CTS) helix region spans residues 158–169; it reads VMLGIMGLLVVI.

This sequence belongs to the peptidase S26B family. Component of the signal peptidase complex (SPC) composed of a catalytic subunit SEC11 and three accessory subunits SPC1, SPC2 and SPC3. The complex induces a local thinning of the ER membrane which is used to measure the length of the signal peptide (SP) h-region of protein substrates. This ensures the selectivity of the complex towards h-regions shorter than 18-20 amino acids. SPC associates with the translocon complex.

The protein resides in the endoplasmic reticulum membrane. The catalysed reaction is Cleavage of hydrophobic, N-terminal signal or leader sequences from secreted and periplasmic proteins.. Its function is as follows. Catalytic component of the signal peptidase complex (SPC) which catalyzes the cleavage of N-terminal signal sequences from nascent proteins as they are translocated into the lumen of the endoplasmic reticulum. Specifically cleaves N-terminal signal peptides that contain a hydrophobic alpha-helix (h-region) shorter than 18-20 amino acids. In Metarhizium robertsii (strain ARSEF 23 / ATCC MYA-3075) (Metarhizium anisopliae (strain ARSEF 23)), this protein is Signal peptidase complex catalytic subunit SEC11 (SEC11).